Reading from the N-terminus, the 347-residue chain is Quinolinate synthase (347 aa).

The iminosuccinate site is built by histidine 47 and serine 68. Position 113 (cysteine 113) interacts with [4Fe-4S] cluster. Residues 139–141 (YAN) and serine 156 contribute to the iminosuccinate site. Cysteine 200 contributes to the [4Fe-4S] cluster binding site. Iminosuccinate contacts are provided by residues 226–228 (HPE) and threonine 243. A [4Fe-4S] cluster-binding site is contributed by cysteine 297.

It belongs to the quinolinate synthase family. Type 1 subfamily. [4Fe-4S] cluster serves as cofactor.

The protein resides in the cytoplasm. The catalysed reaction is iminosuccinate + dihydroxyacetone phosphate = quinolinate + phosphate + 2 H2O + H(+). The protein operates within cofactor biosynthesis; NAD(+) biosynthesis; quinolinate from iminoaspartate: step 1/1. Its function is as follows. Catalyzes the condensation of iminoaspartate with dihydroxyacetone phosphate to form quinolinate. The chain is Quinolinate synthase from Shigella dysenteriae serotype 1 (strain Sd197).